The following is a 441-amino-acid chain: MDSAPSPSSLDFELSPPVLVTMTSTSSSASDNVEGADDDANTHGIFNWRDFSSCWRVSESNLYCFSLALLIWFFASFILIENLYGPKNVWLGPSSSILVEPSSIFVKSIKVKVLDYSEPGLQLYGFYRTPALDCFVNWSESRVLSISHESYKGWPYYLNSGSLLNITYTVKPQGSAVQLVVDEGHQGVPQSVLNDPAYRYNVWSWNLIEGSGMIQLEIRKSSSYYLAVANLKSKDVEVELNIDVKAVLYDTKQSFYNCNFSNGECTFNAMSLVGNSVVVTSPAASQGVSIEDEWYIRFSYQPREIAYVIGTGVVICFMLVAIQFCNRFQCSGGEGHLTEDDSARTRLLADKDDDGSSMGSCDDSYANDDADLEEFMGNDGEASNRSRRLCAICFDVPRDCFFLPCGHSVSCYECGTTMQEADGSCPICRRKMKKVKRIYTV.

The next 2 membrane-spanning stretches (helical) occupy residues 60–80 (SNLYCFSLALLIWFFASFILI) and 305–325 (IAYVIGTGVVICFMLVAIQFC). The RING-type zinc-finger motif lies at 390–429 (CAICFDVPRDCFFLPCGHSVSCYECGTTMQEADGSCPICR).

Expressed in the shoot apical meristems (SAM), root tips and inflorescences, and, at low levels, in floral buds and pollen.

It localises to the endomembrane system. It is found in the vacuole membrane. The enzyme catalyses S-ubiquitinyl-[E2 ubiquitin-conjugating enzyme]-L-cysteine + [acceptor protein]-L-lysine = [E2 ubiquitin-conjugating enzyme]-L-cysteine + N(6)-ubiquitinyl-[acceptor protein]-L-lysine.. It participates in protein modification; protein ubiquitination. Involved in pollen mitosis II (PMII) regulation during male gametogenesis. The protein is E3 ubiquitin-protein ligase APD1 of Arabidopsis thaliana (Mouse-ear cress).